The following is a 283-amino-acid chain: MAAITAALIKQVREDTGAGMLDVKKALTEAEGDVARAKEIIRAKGIAAAGKREGRKAQEGTIASKVVETANGETGYAVELNSETDFVAKTPKFVEFSEEVLGYAVDAEANSADELLEAKAGDSTVKLAVEEAAALFGEHVKVGQFAKISGEHVEVYAHKKSAEMPPSIVAMIATDKAGAAVAHEAALQISAMGAKWLTREDVPADVVESERRVATEKSLAEGKPEKIVPKIVEGRLNAFFKEVVLLEQPFVKDPSKTVGDLFKEVGGAATAFARVEVGKGEEE.

The tract at residues 84 to 87 (TDFV) is involved in Mg(2+) ion dislocation from EF-Tu.

It belongs to the EF-Ts family.

It localises to the cytoplasm. Functionally, associates with the EF-Tu.GDP complex and induces the exchange of GDP to GTP. It remains bound to the aminoacyl-tRNA.EF-Tu.GTP complex up to the GTP hydrolysis stage on the ribosome. The protein is Elongation factor Ts of Bifidobacterium longum subsp. infantis (strain ATCC 15697 / DSM 20088 / JCM 1222 / NCTC 11817 / S12).